We begin with the raw amino-acid sequence, 757 residues long: Protein Lines homolog 1 (757 aa).

A Phosphoserine modification is found at S635.

The protein belongs to the protein lines family. In terms of tissue distribution, expressed in adult testis, prostate, prostate, spleen, thymus, skeletal muscle, fetal kidney and brain.

The polypeptide is Protein Lines homolog 1 (Homo sapiens (Human)).